The sequence spans 242 residues: MVQFKLSTASLLALASYAAAHGYVSSIQADGQTYPGADPHNPNPESPGWQAENTDLGFVEPSAFSTPAIACHKNARAPPAHATVQAGSTIKLTWNTWPESHHGPVLDYIAPCNGDCSSASAGSLNFVKIAEKGLISGSNPGFWAADELIQNGNSWEVTIPANLAPGKYVLRHEIIALHSAGNPNGAQAYPQCINLEVTGGGSATPSGQPATSFYSPNDPGILFNLYQSFDSYPIPGPAVWSG.

An N-terminal signal peptide occupies residues 1 to 20 (MVQFKLSTASLLALASYAAA). His21 lines the Cu(2+) pocket. Residues 31 to 53 (GQTYPGADPHNPNPESPGWQAEN) are disordered. 2 disulfides stabilise this stretch: Cys71/Cys192 and Cys112/Cys116. His101 lines the Cu(2+) pocket. Positions 178 and 187 each coordinate O2. Tyr189 provides a ligand contact to Cu(2+).

This sequence belongs to the polysaccharide monooxygenase AA9 family. The cofactor is Cu(2+).

Its subcellular location is the secreted. The catalysed reaction is [(1-&gt;4)-beta-D-glucosyl]n+m + reduced acceptor + O2 = 4-dehydro-beta-D-glucosyl-[(1-&gt;4)-beta-D-glucosyl]n-1 + [(1-&gt;4)-beta-D-glucosyl]m + acceptor + H2O.. Its function is as follows. Lytic polysaccharide monooxygenase (LPMO) that depolymerizes crystalline and amorphous polysaccharides via the oxidation of scissile alpha- or beta-(1-4)-glycosidic bonds, yielding C1 or C4 oxidation products. Catalysis by LPMOs requires the reduction of the active-site copper from Cu(II) to Cu(I) by a reducing agent and H(2)O(2) or O(2) as a cosubstrate. Active on hemicelluloses, including xylan, glucomannan, and xyloglucan. Shows clear activity on cellooligosaccharides, generating C4 oxidation products. Has no activity on ivory nut mannan (INM), a linear beta-1,4-linked mannan without substitutions. In Malbranchea cinnamomea (Thermophilic fungus), this protein is AA9 family lytic polysaccharide monooxygenase F.